The primary structure comprises 3677 residues: Dystrophin (3677 aa).

An actin-binding region spans residues 1-240 (MLWWEEVEDC…YITSLFQVLP (240 aa)). Calponin-homology (CH) domains are found at residues 15–119 (DVQK…LHWQ) and 134–240 (TNSE…QVLP). An ANK2- and ANK-3 binding region spans residues 63–72 (PKEKGSTRVH). 23 Spectrin repeats span residues 342–447 (LDSY…SNLH), 451–557 (MDLQ…LLQD), 560–668 (LKWQ…QISQ), 728–828 (DITE…NWLE), 831–935 (NNII…ELQT), 944–1046 (RYQE…KLEE), 1049–1154 (NKLR…EALK), 1163–1264 (LQKD…TLEE), 1268–1464 (CWHE…LFQK), 1469–1569 (EQRL…QLEK), 1573–1676 (LSRK…NLLL), 1680–1777 (KHME…TGKA), 1779–1875 (IPLK…KALE), 1878–1980 (HQWY…TLHE), 2001–2098 (YLTE…ERQG), 2106–2209 (KWRH…RVEE), 2215–2316 (SEFQ…GELE), 2317–2415 (VHIK…LRTK), 2465–2569 (ADFN…QLNE), 2576–2678 (QWLE…ALEE), 2682–2786 (LLQQ…KKSL), 2800–2922 (KRLH…RKID), and 2927–3032 (RLQE…QLHE). Residues 1416–1914 (SDLTSHEISL…PEPRDERKIK (499 aa)) form an interaction with SYNM region. The WW domain maps to 3047 to 3080 (TSVQGPWERAISPNKVPYYINHETQTTCWDHPKM). The interval 3050 to 3400 (QGPWERAISP…TVLEGDNMET (351 aa)) is interaction with SYNM. A ZZ-type; degenerate zinc finger spans residues 3300-3356 (KHQAKCNICKECPIIGFRYRSLKHFNYDICQSCFFSGRVAKGHKMHYPMVEYCTPTT). Residues cysteine 3305, cysteine 3308, cysteine 3329, and cysteine 3332 each coordinate Zn(2+). Residues 3458–3510 (DDEHLLIQHYCQSLNQDSPLSQPRSPAQILISLESEERGELERILADLEEENR) form a binds to SNTB1 region. Serine 3475, serine 3482, and serine 3492 each carry phosphoserine. Disordered stretches follow at residues 3520 to 3546 (KQQHEHKGLSPLPSPPEMMPTSPQSPR) and 3595 to 3677 (EAKV…EDTM). 2 stretches are compositionally biased toward polar residues: residues 3599–3618 (NGTTVSSPSTSLQRSDSSQP) and 3654–3664 (QLNNSFPSSRG). 6 positions are modified to phosphoserine: serine 3604, serine 3605, serine 3609, serine 3615, serine 3616, and serine 3658.

In terms of assembly, interacts with SYNM. Interacts with the syntrophins SNTG1 and SNTG2. Interacts with KRT19. Component of the dystrophin-associated glycoprotein complex which is composed of three subcomplexes: a cytoplasmic complex comprised of DMD (or UTRN), DTNA and a number of syntrophins, such as SNTB1, SNTB2, SNTG1 and SNTG2, the transmembrane dystroglycan complex, and the sarcoglycan-sarcospan complex. Interacts with DAG1 (betaDAG1) with DMD; the interaction is inhibited by phosphorylation on the PPXY motif of DAG1. Interacts with SYNM; SNTA1 and SNTB1. Interacts with CMYA5. Directly interacts with ANK2 and ANK3; these interactions do not interfere with betaDAG1-binding and are necessary for proper localization in muscle cells. Identified in a dystroglycan complex that contains at least PRX, DRP2, UTRN, DMD and DAG1. Interacts with DTNB. Interacts with PGM5; the interaction is direct. Interacts with NOS1; localizes NOS1 to sarcolemma in muscle cells. Strongly expressed in skeletal muscle and weak expression observed in newborn brain which increases in adult brain.

Its subcellular location is the cell membrane. It localises to the sarcolemma. The protein resides in the cytoplasm. The protein localises to the cytoskeleton. It is found in the postsynaptic cell membrane. In terms of biological role, anchors the extracellular matrix to the cytoskeleton via F-actin. Ligand for dystroglycan. Component of the dystrophin-associated glycoprotein complex which accumulates at the neuromuscular junction (NMJ) and at a variety of synapses in the peripheral and central nervous systems and has a structural function in stabilizing the sarcolemma. Also implicated in signaling events and synaptic transmission. The chain is Dystrophin (Dmd) from Rattus norvegicus (Rat).